Here is a 236-residue protein sequence, read N- to C-terminus: Hydantoin racemase (236 aa).

Homohexamer, homoheptamer or homooctamer.

The catalysed reaction is a D-5-monosubstituted hydantoin = a L-5-monosubstituted hydantoin. The enzyme catalyses D-5-benzylhydantoin = L-5-benzylhydantoin. Completely inhibited by HgCl(2) and iodoacetamide. Stimulated by dithiothreitol. Involved in the asymmetric conversion of racemic 5-substituted hydantoins to the corresponding L-amino acids. Catalyzes the racemization via enolization of D- and L-5-monosubstituted hydantoins. It shows preference for hydantoins with arylalkyl side chains such as 5-benzylhydantoin (BH) and, to a lesser extent, 5-(3-indolylmethylene)hydantoin (IMH). In Paenarthrobacter aurescens (Arthrobacter aurescens), this protein is Hydantoin racemase.